The chain runs to 469 residues: UDP-N-acetylmuramoylalanine--D-glutamate ligase (469 aa).

An ATP-binding site is contributed by glycine 110–threonine 116.

It belongs to the MurCDEF family.

It localises to the cytoplasm. It catalyses the reaction UDP-N-acetyl-alpha-D-muramoyl-L-alanine + D-glutamate + ATP = UDP-N-acetyl-alpha-D-muramoyl-L-alanyl-D-glutamate + ADP + phosphate + H(+). Its pathway is cell wall biogenesis; peptidoglycan biosynthesis. Functionally, cell wall formation. Catalyzes the addition of glutamate to the nucleotide precursor UDP-N-acetylmuramoyl-L-alanine (UMA). This chain is UDP-N-acetylmuramoylalanine--D-glutamate ligase, found in Synechococcus sp. (strain JA-3-3Ab) (Cyanobacteria bacterium Yellowstone A-Prime).